We begin with the raw amino-acid sequence, 456 residues long: Anthocyanidin 3-O-glucosyltransferase UFGT (456 aa).

Residue serine 18 participates in kaempferol binding. Serine 18 is a binding site for quercetin. Threonine 19 is a UDP binding site. Residue threonine 19 participates in UDP-alpha-D-glucose binding. Residues histidine 20 and glutamine 84 each contribute to the kaempferol site. The Proton acceptor role is filled by histidine 20. Glutamine 84 serves as a coordination point for quercetin. Aspartate 119 (charge relay) is an active-site residue. UDP-alpha-D-glucose is bound at residue threonine 141. 2 residues coordinate kaempferol: histidine 150 and glutamine 188. Histidine 150 and glutamine 188 together coordinate quercetin. The UDP site is built by threonine 280, serine 306, tryptophan 332, alanine 333, and histidine 350. Residues threonine 280, serine 306, tryptophan 332, alanine 333, histidine 350, tryptophan 353, asparagine 354, serine 355, and glutamate 358 each contribute to the UDP-alpha-D-glucose site. Residues asparagine 354, serine 355, and glutamate 358 each contribute to the UDP site. Glycine 373 contributes to the quercetin binding site. UDP-alpha-D-glucose contacts are provided by aspartate 374 and glutamine 375.

It belongs to the UDP-glycosyltransferase family. In terms of tissue distribution, detected only in berry skin.

The enzyme catalyses an anthocyanidin + UDP-alpha-D-glucose + H(+) = an anthocyanidin 3-O-beta-D-glucoside + UDP. It catalyses the reaction cyanidin + UDP-alpha-D-glucose = cyanidin 3-O-beta-D-glucoside + UDP + H(+). The catalysed reaction is delphinidin + UDP-alpha-D-glucose = delphinidin 3-O-beta-D-glucoside + UDP. It carries out the reaction peonidin + UDP-alpha-D-glucose = peonidin 3-O-beta-D-glucoside + UDP. The enzyme catalyses pelargonidin + UDP-alpha-D-glucose = pelargonidin 3-O-beta-D-glucoside + UDP. It catalyses the reaction malvidin + UDP-alpha-D-glucose = malvidin 3-O-beta-D-glucoside + UDP. The catalysed reaction is a flavonol + UDP-alpha-D-glucose = a flavonol 3-O-beta-D-glucoside + UDP + H(+). It participates in pigment biosynthesis; anthocyanin biosynthesis. Inhibited by Mn(2+) and Zn(2+). In terms of biological role, in the presence of other necessary color factors, this glycosylation reaction allows the accumulation of anthocyanin pigments. Involved in the formation of red wine pigments. UDP-glucose (UDP-Glc) is the physiological sugar donor, and cyanidin is the natural acceptor in vivo. Can glucosylate the anthocyanidins delphinidin, peonidin, pelargonidin and malvidin. The flavonols quercitin and kaempferol can also be glucosylated in vitro, but with glucosylation rates 50-100 times lower than cyanidin. In vitro, can use UDP-Glc, UDP-5SGlc, UDP-Xyl, UDP-Man, UDP-Gal, UDP-GlcNAc, GDP-Glc, dTDP-Glc and dTDP-Xyl as sugar donors, but not UDP-6OMeGal, UDP-Ara, UDP-6FGal, UDP-GlcN, UDP-2FGal, UDP-5SAra, GDP-Man, GDP-Fuc, UDP-Fuc or UDP-Rha. The sequence is that of Anthocyanidin 3-O-glucosyltransferase UFGT from Vitis vinifera (Grape).